The primary structure comprises 542 residues: Esterase S (542 aa).

A signal peptide spans 1–22 (MTQILLPIALLCLFAASTLSNP). A disulfide bridge connects residues cysteine 81 and cysteine 100. An N-linked (GlcNAc...) asparagine glycan is attached at asparagine 110. Serine 204 acts as the Acyl-ester intermediate in catalysis. Cysteine 256 and cysteine 268 are disulfide-bonded. Asparagine 396 is a glycosylation site (N-linked (GlcNAc...) asparagine). The cysteines at positions 507 and 528 are disulfide-linked.

The protein belongs to the type-B carboxylesterase/lipase family. In terms of assembly, monomer. Specifically expressed in the ejaculatory bulbs of male.

The protein localises to the secreted. The catalysed reaction is a carboxylic ester + H2O = an alcohol + a carboxylate + H(+). Functionally, transferred from the ejaculatory bulbs of males to the female genitals upon copulation, plays an important role in the reproductive biology. The sequence is that of Esterase S (EstS) from Drosophila virilis (Fruit fly).